A 685-amino-acid chain; its full sequence is MDVCVRLALWLLWGLLLHQGQSLSHSHSEKATGTSSGANSEESTAAEFCRIDKPLCHSEDEKLSFEAVRNIHKLMDDDANGDVDVEESDEFLREDLNYHDPTVKHSTFHGEDKLISVEDLWKAWKSSEVYNWTVDEVVQWLITYVELPQYEETFRKLQLSGHAMPRLAVTNTTMTGTVLKMTDRSHRQKLQLKALDTVLFGPPLLTRHNHLKDFMLVVSIVIGVGGCWFAYIQNRYSKEHMKKMMKDLEGLHRAEQSLHDLQERLHKAQEEHRTVEVEKVHLEKKLRDEINLAKQEAQRLKELREGTENERSRQKYAEEELEQVREALRKAEKELESHSSWYAPEALQKWLQLTHEVEVQYYNIKKQNAEKQLLVAKEGAEKIKKKRNTLFGTFHVAHSSSLDDVDHKILTAKQALSEVTAALRERLHRWQQIEILCGFQIVNNPGIHSLVAALNIDPSWMGSTRPNPAHFIMTDDVDDMDEEIVSPLSMQSPSLQSSVRQRLTEPQHGLGSQRDLTHSDSESSLHMSDRQRVAPKPPQMSRAADEALNAMTSNGSHRLIEGVHPGSLVEKLPDSPALAKKALLALNHGLDKAHSLMELSPSAPPGGSPHLDSSRSHSPSSPDPDTPSPVGDSRALQASRNTRIPHLAGKKAVAEEDNGSIGEETDSSPGRKKFPLKIFKKPLKK.

The N-terminal stretch at 1–22 (MDVCVRLALWLLWGLLLHQGQS) is a signal peptide. The Extracellular portion of the chain corresponds to 23–213 (LSHSHSEKAT…LLTRHNHLKD (191 aa)). 2 EF-hand domains span residues 64–97 (SFEA…EDLN) and 102–126 (TVKH…AWKS). Ca(2+) is bound by residues aspartate 76, aspartate 78, asparagine 80, aspartate 82, and glutamate 87. 2 N-linked (GlcNAc...) asparagine glycosylation sites follow: asparagine 131 and asparagine 171. One can recognise an SAM domain in the interval 132-200 (WTVDEVVQWL…QLKALDTVLF (69 aa)). The chain crosses the membrane as a helical span at residues 214–234 (FMLVVSIVIGVGGCWFAYIQN). The Cytoplasmic portion of the chain corresponds to 235-685 (RYSKEHMKKM…LKIFKKPLKK (451 aa)). Positions 248 to 442 (LEGLHRAEQS…IEILCGFQIV (195 aa)) form a coiled coil. Phosphoserine is present on serine 257. The interval 344–442 (PEALQKWLQL…IEILCGFQIV (99 aa)) is SOAR/CAD. The segment at 475–483 (DDVDDMDEE) is contributes to fast Ca(2+)-dependent inactivation of CRAC channels. The span at 490–499 (MQSPSLQSSV) shows a compositional bias: low complexity. The tract at residues 490-542 (MQSPSLQSSVRQRLTEPQHGLGSQRDLTHSDSESSLHMSDRQRVAPKPPQMSR) is disordered. At threonine 504 the chain carries Phosphothreonine. A Phosphoserine modification is found at serine 512. Residues 515–532 (DLTHSDSESSLHMSDRQR) are compositionally biased toward basic and acidic residues. Residue threonine 517 is modified to Phosphothreonine. Residues serine 519, serine 521, serine 523, serine 524, serine 567, serine 575, serine 602, serine 608, serine 618, serine 621, and serine 628 each carry the phosphoserine modification. The disordered stretch occupies residues 596 to 685 (LMELSPSAPP…LKIFKKPLKK (90 aa)). A compositionally biased stretch (low complexity) spans 608–620 (SPHLDSSRSHSPS). The short motif at 642–645 (TRIP) is the Microtubule tip localization signal element. Over residues 655–666 (EEDNGSIGEETD) the composition is skewed to acidic residues. Serine 660 bears the Phosphoserine mark. Threonine 665 bears the Phosphothreonine mark. Phosphoserine is present on serine 668. The span at 670–685 (GRKKFPLKIFKKPLKK) shows a compositional bias: basic residues. Positions 672–685 (KKFPLKIFKKPLKK) are required for generation of inwardly rectifying CRAC currents.

Monomer in the presence of Ca(2+); it oligomerizes in absence of Ca(2+). Forms homooligomers and heterooligomers with STIM2. Interacts with pore-forming subunits of CRAC channels, ORAI1, ORAI2 and ORAI3; this interaction is potentiated upon Ca(2+) store depletion. Interacts (via the transmembrane region and the SOAR/CAD domain) with SPPL3; the interaction promotes the binding of STIM1 to ORAI1. Interacts (via the SOAR/CAD domain) with ORAI1. Interacts with MAPRE1; probably required for targeting to the growing microtubule plus ends. Interacts with CRACR2A/EFCAB4B; the interaction is direct and takes place in absence of Ca(2+). Forms a complex with CRACR2A/EFCAB4B and ORAI1 at low concentration of Ca(2+), the complex dissociates at elevated Ca(2+) concentrations. Interacts with SARAF, promoting a slow inactivation of STIM1-dependent SOCE activity, possibly by facilitating the deoligomerization of STIM1. Interacts with EFHB; the interaction takes place upon Ca(2+)-store depletion and inhibits the association with SARAF. Interacts with ASPH (isoform 8). Interacts with SLC35G1; intracellular Ca(2+)-dependent. May interact with ATP1A1, ATP2A2, ATP2B1, ATP2B4, KPNB1 and XPO1; through SLC35G1. Interacts with TMEM203. Interacts with STIMATE, promoting STIM1 conformational switch. Interacts with TMEM178A. Interacts with CASQ1 (via C-terminal end and preferentially with the monomeric form); this interaction increases in response to a depletion of intracellular Ca(2+), decreases both STIM1 aggregation and clustering, interaction of STIM1 with ORAI1 and store-operated Ca(2+) entry (SOCE) activity. Interacts with ADCY8. In terms of processing, glycosylation is required for cell surface expression. Post-translationally, phosphorylated predominantly on Ser residues. As to expression, ubiquitously expressed in various human primary cells and tumor cell lines.

Its subcellular location is the cell membrane. The protein localises to the endoplasmic reticulum membrane. The protein resides in the cytoplasm. It is found in the cytoskeleton. It localises to the sarcoplasmic reticulum. Acts as a Ca(2+) sensor that gates two major inward rectifying Ca(2+) channels at the plasma membrane: Ca(2+) release-activated Ca(2+) (CRAC) channels and arachidonate-regulated Ca(2+)-selective (ARC) channels. Plays a role in mediating store-operated Ca(2+) entry (SOCE), a Ca(2+) influx following depletion of intracellular Ca(2+) stores. Upon Ca(2+) depletion, translocates from the endoplasmic reticulum to the plasma membrane where it activates CRAC channel pore-forming subunits ORA1, ORA2 and ORAI3 to generate sustained and oscillatory Ca(2+) entry. Involved in enamel formation. This is Stromal interaction molecule 1 (STIM1) from Homo sapiens (Human).